A 209-amino-acid polypeptide reads, in one-letter code: PF03932 family protein CutC (209 aa).

The protein resides in the cytoplasm. The sequence is that of PF03932 family protein CutC from Streptococcus pyogenes serotype M6 (strain ATCC BAA-946 / MGAS10394).